Consider the following 580-residue polypeptide: Serine/threonine-protein kinase srk1 (580 aa).

Polar residues predominate over residues 51–61; sequence VADSTQNPTSK. Residues 51-91 are disordered; the sequence is VADSTQNPTSKPKSRHAHFHETVHENPSEYSRSKCKQPTNE. The Protein kinase domain occupies 124-421; it reads YTLLQKMGDG…IHQFLAHPWI (298 aa). ATP is bound by residues 130–138 and Lys153; that span reads MGDGAFSNV. Asp257 functions as the Proton acceptor in the catalytic mechanism. The segment at 530–580 is disordered; sequence NLSGENDPSLASRQPAQSQQQSSQRSRNKFKGFQLNLSKATLYNRRHRQKV. Residues 537–554 show a composition bias toward low complexity; sequence PSLASRQPAQSQQQSSQR.

This sequence belongs to the protein kinase superfamily. CAMK Ser/Thr protein kinase family. CaMK subfamily. The cofactor is Mg(2+). In terms of processing, phosphorylated by sty1.

It localises to the cytoplasm. The protein resides in the nucleus. It is found in the nucleolus. The protein localises to the spore core. It carries out the reaction L-seryl-[protein] + ATP = O-phospho-L-seryl-[protein] + ADP + H(+). The catalysed reaction is L-threonyl-[protein] + ATP = O-phospho-L-threonyl-[protein] + ADP + H(+). Its function is as follows. Delays the mitotic G2/M transition by promoting nuclear exclusion of cdc25. During osmotic stress, inhibits the G2/M transition in a sty1 stress-activated MAPK pathway-dependent manner. This chain is Serine/threonine-protein kinase srk1, found in Schizosaccharomyces pombe (strain 972 / ATCC 24843) (Fission yeast).